Consider the following 445-residue polypeptide: D-serine transporter DsdX (445 aa).

The next 12 membrane-spanning stretches (helical) occupy residues 5 to 25 (IWVVSTLLISIVLIVLTIVKF), 29 to 49 (PFLALLLASFFVGTMMGMGPL), 57 to 77 (SGIGGTLGFLAAVIGLGTILG), 106 to 126 (VLVGLICGITLFVEVGVVLLI), 140 to 160 (LLKLAIPLCTALMAVHCVVPP), 178 to 198 (VIVYGLLVGLMASLIGGPLFL), 224 to 244 (TLPSLGATLFTVLLPIALMLV), 265 to 285 (IGNPITATFIAVFVAYYVLGI), 302 to 322 (FGSIANILLIIGAGGAFNAIL), 343 to 363 (ILLAWLVALILHAAVGSATVA), 385 to 405 (IIAIAIGSGAIGCTIVTDSLF), and 425 to 445 (TATFIASVIALAGTFLLSFII).

Belongs to the GntP permease family.

The protein resides in the cell inner membrane. Uptake of D-serine is inhibited by carbonyl cyanide m-chlorophenylhydrazone (CCCP), and at high concentrations of D-threonine, stimulated by D-cycloserine and not affected by D-alanine or glycine. Functionally, protein that allows transport of D-serine across the inner membrane, does not transport D-alanine nor probably glycine. Is probably a H(+) symporter, as CCCP inhibits transport. Transports D-serine more efficiently than CycA. The sequence is that of D-serine transporter DsdX (dsdX) from Escherichia coli O6:H1 (strain CFT073 / ATCC 700928 / UPEC).